The sequence spans 451 residues: tRNA-2-methylthio-N(6)-dimethylallyladenosine synthase (451 aa).

Residues 3–120 (LKLHIKTYGC…LPEMINHVRI (118 aa)) form the MTTase N-terminal domain. The [4Fe-4S] cluster site is built by Cys-12, Cys-49, Cys-83, Cys-157, Cys-161, and Cys-164. A Radical SAM core domain is found at 143–375 (QAKGPTAFVS…QECIRKQAMK (233 aa)). In terms of domain architecture, TRAM spans 378-441 (QAMKGTVQCI…SNSLRGELIS (64 aa)).

This sequence belongs to the methylthiotransferase family. MiaB subfamily. Monomer. [4Fe-4S] cluster serves as cofactor.

The protein resides in the cytoplasm. It carries out the reaction N(6)-dimethylallyladenosine(37) in tRNA + (sulfur carrier)-SH + AH2 + 2 S-adenosyl-L-methionine = 2-methylsulfanyl-N(6)-dimethylallyladenosine(37) in tRNA + (sulfur carrier)-H + 5'-deoxyadenosine + L-methionine + A + S-adenosyl-L-homocysteine + 2 H(+). In terms of biological role, catalyzes the methylthiolation of N6-(dimethylallyl)adenosine (i(6)A), leading to the formation of 2-methylthio-N6-(dimethylallyl)adenosine (ms(2)i(6)A) at position 37 in tRNAs that read codons beginning with uridine. The polypeptide is tRNA-2-methylthio-N(6)-dimethylallyladenosine synthase (Baumannia cicadellinicola subsp. Homalodisca coagulata).